The primary structure comprises 352 residues: S-adenosylmethionine:tRNA ribosyltransferase-isomerase (352 aa).

This sequence belongs to the QueA family. As to quaternary structure, monomer.

Its subcellular location is the cytoplasm. The catalysed reaction is 7-aminomethyl-7-carbaguanosine(34) in tRNA + S-adenosyl-L-methionine = epoxyqueuosine(34) in tRNA + adenine + L-methionine + 2 H(+). Its pathway is tRNA modification; tRNA-queuosine biosynthesis. Its function is as follows. Transfers and isomerizes the ribose moiety from AdoMet to the 7-aminomethyl group of 7-deazaguanine (preQ1-tRNA) to give epoxyqueuosine (oQ-tRNA). The polypeptide is S-adenosylmethionine:tRNA ribosyltransferase-isomerase (Paraburkholderia xenovorans (strain LB400)).